Reading from the N-terminus, the 268-residue chain is Single-stranded DNA-binding protein WHY3, chloroplastic (268 aa).

Residues 1-75 (MSQLLSSPPM…KQRFGDSSSS (75 aa)) constitute a chloroplast transit peptide. The segment at 93–98 (KGKAAL) is required for ssDNA binding. The Nuclear localization signal signature appears at 171 to 185 (KGKGSDEGKVRKVLK).

It belongs to the Whirly family. In terms of assembly, homotetramer.

The protein resides in the plastid. The protein localises to the chloroplast. Its subcellular location is the nucleus. Its function is as follows. Single-stranded DNA-binding protein that functions in both chloroplasts and nucleus. In chloroplasts, maintains plastid genome stability by preventing break-induced and short homology-dependent illegitimate recombinations. In the nucleus, is recruited to a distal element upstream of the kinesin KP1 to mediate the transcriptional repression of KP1. Can bind double-stranded DNA in vivo. The chain is Single-stranded DNA-binding protein WHY3, chloroplastic (WHY3) from Arabidopsis thaliana (Mouse-ear cress).